Reading from the N-terminus, the 260-residue chain is Carbonic anhydrase 3 (260 aa).

Alanine 2 carries the post-translational modification N-acetylalanine. The Alpha-carbonic anhydrase domain occupies 3–259 (KEWGYADHNG…IKGRIVKASF (257 aa)). Serine 29, serine 43, serine 50, and serine 55 each carry phosphoserine. Residues 64 to 67 (KTCR) are involved in proton transfer. A Phosphothreonine modification is found at threonine 73. The Zn(2+) site is built by histidine 94, histidine 96, and histidine 119. Position 127 is a phosphotyrosine (tyrosine 127). Threonine 176 bears the Phosphothreonine mark. Residues cysteine 182 and cysteine 187 each carry the S-glutathionyl cysteine modification. Residue 198 to 199 (TT) coordinates substrate. Threonine 216 is modified (phosphothreonine). Residue serine 219 is modified to Phosphoserine.

Belongs to the alpha-carbonic anhydrase family. It depends on Zn(2+) as a cofactor. Post-translationally, S-thiolated both by thiol-disulfide exchange with glutathione disulfide and by oxyradical-initiated S-thiolation with reduced glutathione. S-glutathionylated in hepatocytes under oxidative stress.

It localises to the cytoplasm. It catalyses the reaction hydrogencarbonate + H(+) = CO2 + H2O. With respect to regulation, inhibited by acetazolamide. Reversible hydration of carbon dioxide. The sequence is that of Carbonic anhydrase 3 from Sus scrofa (Pig).